The following is a 736-amino-acid chain: Phosphoribosylformylglycinamidine synthase subunit PurL (736 aa).

The active site involves His-49. ATP is bound by residues Tyr-52 and Lys-91. Residue Glu-93 coordinates Mg(2+). Substrate is bound by residues 94-97 (SHNH) and Arg-116. His-95 (proton acceptor) is an active-site residue. Asp-117 provides a ligand contact to Mg(2+). Gln-240 provides a ligand contact to substrate. A Mg(2+)-binding site is contributed by Asp-268. 312-314 (ESQ) provides a ligand contact to substrate. Positions 493 and 530 each coordinate ATP. Residue Asn-531 coordinates Mg(2+). Ser-533 contacts substrate.

It belongs to the FGAMS family. As to quaternary structure, monomer. Part of the FGAM synthase complex composed of 1 PurL, 1 PurQ and 2 PurS subunits.

The protein localises to the cytoplasm. The enzyme catalyses N(2)-formyl-N(1)-(5-phospho-beta-D-ribosyl)glycinamide + L-glutamine + ATP + H2O = 2-formamido-N(1)-(5-O-phospho-beta-D-ribosyl)acetamidine + L-glutamate + ADP + phosphate + H(+). The protein operates within purine metabolism; IMP biosynthesis via de novo pathway; 5-amino-1-(5-phospho-D-ribosyl)imidazole from N(2)-formyl-N(1)-(5-phospho-D-ribosyl)glycinamide: step 1/2. In terms of biological role, part of the phosphoribosylformylglycinamidine synthase complex involved in the purines biosynthetic pathway. Catalyzes the ATP-dependent conversion of formylglycinamide ribonucleotide (FGAR) and glutamine to yield formylglycinamidine ribonucleotide (FGAM) and glutamate. The FGAM synthase complex is composed of three subunits. PurQ produces an ammonia molecule by converting glutamine to glutamate. PurL transfers the ammonia molecule to FGAR to form FGAM in an ATP-dependent manner. PurS interacts with PurQ and PurL and is thought to assist in the transfer of the ammonia molecule from PurQ to PurL. This Rhodopseudomonas palustris (strain TIE-1) protein is Phosphoribosylformylglycinamidine synthase subunit PurL.